Consider the following 153-residue polypeptide: MDYCNKKHTAEEYVKISDNNYVPFPEAFSDGGITWQLLHSSPETSSWTAIFNCPAGSSFASHIHAGPGEYFLTKGKMEVRGGEQEGGSTAYAPSYGFESSGALHGKTFFPVESQFYMTFLGPLNFIDDNGKVIASIGWAEAQGAWLATKNEAA.

In terms of assembly, homotetramer. Fe cation is required as a cofactor.

The enzyme catalyses acetylacetone + O2 = methylglyoxal + acetate + H(+). The protein operates within xenobiotic degradation; acetylacetone degradation. Its function is as follows. Cleaves acetylacetone to equimolar amounts of methylglyoxal and acetate, consuming one equivalent of molecular oxygen. The chain is Acetylacetone-cleaving enzyme (dke1) from Acinetobacter johnsonii.